Here is a 410-residue protein sequence, read N- to C-terminus: uncharacterized protein (410 aa).

An NAD(+)-binding site is contributed by 11–39 (VLVIGGGPSGTALSAELAARGLDVQQLAP).

This sequence belongs to the lycopene cyclase family.

This is an uncharacterized protein from Deinococcus radiodurans (strain ATCC 13939 / DSM 20539 / JCM 16871 / CCUG 27074 / LMG 4051 / NBRC 15346 / NCIMB 9279 / VKM B-1422 / R1).